The primary structure comprises 571 residues: Proline--tRNA ligase (571 aa).

The protein belongs to the class-II aminoacyl-tRNA synthetase family. ProS type 1 subfamily. As to quaternary structure, homodimer.

The protein localises to the cytoplasm. The catalysed reaction is tRNA(Pro) + L-proline + ATP = L-prolyl-tRNA(Pro) + AMP + diphosphate. Catalyzes the attachment of proline to tRNA(Pro) in a two-step reaction: proline is first activated by ATP to form Pro-AMP and then transferred to the acceptor end of tRNA(Pro). As ProRS can inadvertently accommodate and process non-cognate amino acids such as alanine and cysteine, to avoid such errors it has two additional distinct editing activities against alanine. One activity is designated as 'pretransfer' editing and involves the tRNA(Pro)-independent hydrolysis of activated Ala-AMP. The other activity is designated 'posttransfer' editing and involves deacylation of mischarged Ala-tRNA(Pro). The misacylated Cys-tRNA(Pro) is not edited by ProRS. This Vibrio campbellii (strain ATCC BAA-1116) protein is Proline--tRNA ligase.